Reading from the N-terminus, the 1147-residue chain is MADQIPLYPVRSAAAAAANRKRAAYYSAAGPRPGADRHSRYQLEDESAHLDEMPLMMSEEGFENEESDYHTLPRARIMQRKRGLEWFVCDGWKFLCTSCCGWLINICRRKKELKARTVWLGCPEKCEEKHPRNSIKNQKYNVFTFIPGVLYEQFKFFLNLYFLVISCSQFVPALKIGYLYTYWAPLGFVLAVTMTREAIDEFRRFQRDKEVNSQLYSKLTVRGKVQVKSSDIQVGDLIIVEKNQRIPSDMVFLRTSEKAGSCFIRTDQLDGETDWKLKVAVSCTQQLPALGDLFSISAYVYAQKPQMDIHSFEGTFTREDSDPPIHESLSIENTLWASTIVASGTVIGVVIYTGKETRSVMNTSNPKNKVGLLDLELNRLTKALFLALVALSIVMVTLQGFVGPWYRNLFRFLLLFSYIIPISLRVNLDMGKAVYGWMMMKDENIPGTVVRTSTIPEELGRLVYLLTDKTGTLTQNEMIFKRLHLGTVSYGADTMDEIQSHVRDSYSQMQSQAGGNNTGSTPLRKAQSSAPKVRKSVSSRIHEAVKAIVLCHNVTPVYESRAGVTEETEFAEADQDFSDENRTYQASSPDEVALVQWTESVGLTLVSRDLTSMQLKTPSGQVLSFCILQLFPFTSESKRMGVIVRDESTAEITFYMKGADVAMSPIVQYNDWLEEECGNMAREGLRTLVVAKKALTEEQYQDFESRYTQAKLSMHDRSLKVAAVVESLEREMELLCLTGVEDQLQADVRPTLEMLRNAGIKIWMLTGDKLETATCIAKSSHLVSRTQDIHIFRQVTSRGEAHLELNAFRRKHDCALVISGDSLEVCLKYYEHEFVELACQCPAVVCCRCSPTQKARIVTLLQQHTGRRTCAIGDGGNDVSMIQAADCGIGIEGKEGKQASLAADFSITQFRHIGRLLMVHGRNSYKRSAALGQFVMHRGLIISTMQAVFSSVFYFASVPLYQGFLMVGYATIYTMFPVFSLVLDQDVKPEMAMLYPELYKDLTKGRSLSFKTFLIWVLISIYQGGILMYGALVLFESEFVHVVAISFTALILTELLMVALTVRTWHWLMVVAEFLSLGCYVSSLAFLNEYFGIGRVSFGAFLDVAFITTVTFLWKVSAITVVSCLPLYVLKYLRRKLSPPSYCKLAS.

The Cytoplasmic segment spans residues 1-146 (MADQIPLYPV…NQKYNVFTFI (146 aa)). A helical membrane pass occupies residues 147 to 168 (PGVLYEQFKFFLNLYFLVISCS). Residues 169–173 (QFVPA) lie on the Extracellular side of the membrane. Residues 174 to 196 (LKIGYLYTYWAPLGFVLAVTMTR) form a helical membrane-spanning segment. The Cytoplasmic portion of the chain corresponds to 197–380 (EAIDEFRRFQ…GLLDLELNRL (184 aa)). The chain crosses the membrane as a helical span at residues 381-401 (TKALFLALVALSIVMVTLQGF). Residues 402 to 409 (VGPWYRNL) lie on the Extracellular side of the membrane. A helical membrane pass occupies residues 410–431 (FRFLLLFSYIIPISLRVNLDMG). The Cytoplasmic segment spans residues 432–930 (KAVYGWMMMK…GRNSYKRSAA (499 aa)). Catalysis depends on aspartate 468, which acts as the 4-aspartylphosphate intermediate. Positions 468, 469, and 470 each coordinate ATP. Residue aspartate 468 participates in Mg(2+) binding. Threonine 470 is a binding site for Mg(2+). Positions 503–535 (RDSYSQMQSQAGGNNTGSTPLRKAQSSAPKVRK) are disordered. Positions 505–530 (SYSQMQSQAGGNNTGSTPLRKAQSSA) are enriched in polar residues. Positions 591, 633, 638, 657, 686, 687, 766, 767, 768, 848, and 854 each coordinate ATP. Aspartate 874 contributes to the Mg(2+) binding site. Asparagine 877 and aspartate 878 together coordinate ATP. Aspartate 878 contacts Mg(2+). The chain crosses the membrane as a helical span at residues 931 to 951 (LGQFVMHRGLIISTMQAVFSS). Residues 952 to 963 (VFYFASVPLYQG) are Extracellular-facing. A helical membrane pass occupies residues 964–982 (FLMVGYATIYTMFPVFSLV). Residues 983-1012 (LDQDVKPEMAMLYPELYKDLTKGRSLSFKT) lie on the Cytoplasmic side of the membrane. The helical transmembrane segment at 1013 to 1031 (FLIWVLISIYQGGILMYGA) threads the bilayer. Over 1032 to 1038 (LVLFESE) the chain is Extracellular. A helical membrane pass occupies residues 1039 to 1061 (FVHVVAISFTALILTELLMVALT). The Cytoplasmic segment spans residues 1062–1067 (VRTWHW). A helical membrane pass occupies residues 1068–1088 (LMVVAEFLSLGCYVSSLAFLN). Topologically, residues 1089 to 1105 (EYFGIGRVSFGAFLDVA) are extracellular. The helical transmembrane segment at 1106 to 1130 (FITTVTFLWKVSAITVVSCLPLYVL) threads the bilayer. The Cytoplasmic segment spans residues 1131-1147 (KYLRRKLSPPSYCKLAS).

It belongs to the cation transport ATPase (P-type) (TC 3.A.3) family. Type IV subfamily. Mg(2+) is required as a cofactor.

The protein resides in the golgi apparatus. The protein localises to the trans-Golgi network membrane. It carries out the reaction ATP + H2O + phospholipidSide 1 = ADP + phosphate + phospholipidSide 2.. The sequence is that of Probable phospholipid-transporting ATPase IIB (ATP9B) from Homo sapiens (Human).